A 347-amino-acid polypeptide reads, in one-letter code: 4-hydroxy-2-oxovalerate aldolase 2 (347 aa).

Positions 7–259 constitute a Pyruvate carboxyltransferase domain; it reads VRITDTSLRD…KTGIDFFDIA (253 aa). Residue 15 to 16 participates in substrate binding; that stretch reads RD. Aspartate 16 provides a ligand contact to Mn(2+). Histidine 19 functions as the Proton acceptor in the catalytic mechanism. Substrate contacts are provided by serine 169 and histidine 198. Residues histidine 198 and histidine 200 each contribute to the Mn(2+) site. A substrate-binding site is contributed by tyrosine 289.

This sequence belongs to the 4-hydroxy-2-oxovalerate aldolase family.

The enzyme catalyses (S)-4-hydroxy-2-oxopentanoate = acetaldehyde + pyruvate. This is 4-hydroxy-2-oxovalerate aldolase 2 from Mycobacterium marinum (strain ATCC BAA-535 / M).